A 340-amino-acid chain; its full sequence is Ketol-acid reductoisomerase (NADP(+)) (340 aa).

The 182-residue stretch at 1 to 182 (MRVYYDRDCD…GGGRSGIIET (182 aa)) folds into the KARI N-terminal Rossmann domain. Residues 24–27 (YGSQ), R48, S51, S53, and 83–86 (DELQ) each bind NADP(+). Residue H108 is part of the active site. NADP(+) is bound at residue G134. A KARI C-terminal knotted domain is found at 183-329 (NFRQECETDL…EKLRGMMPWI (147 aa)). Residues D191, E195, E227, and E231 each coordinate Mg(2+). S252 lines the substrate pocket.

The protein belongs to the ketol-acid reductoisomerase family. Mg(2+) is required as a cofactor.

It catalyses the reaction (2R)-2,3-dihydroxy-3-methylbutanoate + NADP(+) = (2S)-2-acetolactate + NADPH + H(+). The enzyme catalyses (2R,3R)-2,3-dihydroxy-3-methylpentanoate + NADP(+) = (S)-2-ethyl-2-hydroxy-3-oxobutanoate + NADPH + H(+). The protein operates within amino-acid biosynthesis; L-isoleucine biosynthesis; L-isoleucine from 2-oxobutanoate: step 2/4. Its pathway is amino-acid biosynthesis; L-valine biosynthesis; L-valine from pyruvate: step 2/4. Involved in the biosynthesis of branched-chain amino acids (BCAA). Catalyzes an alkyl-migration followed by a ketol-acid reduction of (S)-2-acetolactate (S2AL) to yield (R)-2,3-dihydroxy-isovalerate. In the isomerase reaction, S2AL is rearranged via a Mg-dependent methyl migration to produce 3-hydroxy-3-methyl-2-ketobutyrate (HMKB). In the reductase reaction, this 2-ketoacid undergoes a metal-dependent reduction by NADPH to yield (R)-2,3-dihydroxy-isovalerate. The polypeptide is Ketol-acid reductoisomerase (NADP(+)) (Cereibacter sphaeroides (strain ATCC 17023 / DSM 158 / JCM 6121 / CCUG 31486 / LMG 2827 / NBRC 12203 / NCIMB 8253 / ATH 2.4.1.) (Rhodobacter sphaeroides)).